Here is a 59-residue protein sequence, read N- to C-terminus: Small ribosomal subunit protein bS21 (59 aa).

A disordered region spans residues lysine 34–phenylalanine 59. Residues valine 43–phenylalanine 59 are compositionally biased toward basic residues.

This sequence belongs to the bacterial ribosomal protein bS21 family.

The polypeptide is Small ribosomal subunit protein bS21 (Desulforudis audaxviator (strain MP104C)).